Consider the following 838-residue polypeptide: Rho GTPase-activating protein 12 (838 aa).

In terms of domain architecture, SH3 spans 10 to 72; sequence AGQAYIEVEY…PAQYVKEVTR (63 aa). Polar residues-rich tracts occupy residues 155 to 172 and 189 to 198; these read GKFNSDSHSPKVSSQNRT and TSFSQEQSCD. The segment at 155–239 is disordered; the sequence is GKFNSDSHSP…PPNQGRPDSP (85 aa). A Phosphoserine modification is found at Ser163. Phosphoserine is present on residues Ser199, Ser211, and Ser213. Phosphothreonine occurs at positions 228 and 229. Ser238 carries the post-translational modification Phosphoserine. Tyr241 is modified (phosphotyrosine). In terms of domain architecture, WW 1 spans 263 to 296; sequence IQVNGEWETHKDSSGRCYYYNRTTQERTWKPPRW. Residues 291–302 show a composition bias toward basic and acidic residues; it reads WKPPRWARDVST. Positions 291–346 are disordered; it reads WKPPRWARDVSTSRDFQSPGEQEPLSSEENYHSSCFSQSDSQCGSPPRGWSEELDE. A compositionally biased stretch (polar residues) spans 303-334; sequence SRDFQSPGEQEPLSSEENYHSSCFSQSDSQCG. One can recognise a WW 2 domain in the interval 355 to 388; that stretch reads DYTKEKWLKHVDDQGRQYYYSADGSRSEWELPKY. A disordered region spans residues 425-456; it reads DSNDKDSPTTTKLCLPENESPPTSSKHQDPGQ. Positions 466–567 constitute a PH domain; it reads KITENGKKVR…WFKVLSSTIN (102 aa). Acidic residues predominate over residues 572–582; sequence EADEAAEEETP. The interval 572-620 is disordered; that stretch reads EADEAAEEETPDSPGVEKHDKEKDQKELKKLRSMKGSSMDSSEQKKTKK. The residue at position 584 (Ser584) is a Phosphoserine. Residues 586–601 are compositionally biased toward basic and acidic residues; it reads GVEKHDKEKDQKELKK. The Rho-GAP domain maps to 648 to 836; it reads SNLANLCQRE…LILLELSTVF (189 aa).

In terms of biological role, GTPase activator for the Rho-type GTPases by converting them to an inactive GDP-bound state. The polypeptide is Rho GTPase-activating protein 12 (Arhgap12) (Mus musculus (Mouse)).